A 171-amino-acid polypeptide reads, in one-letter code: Crossover junction endodeoxyribonuclease RuvC (171 aa).

Residues Asp-7, Glu-66, and Asp-138 contribute to the active site. Residues Asp-7, Glu-66, and Asp-138 each coordinate Mg(2+).

The protein belongs to the RuvC family. In terms of assembly, homodimer which binds Holliday junction (HJ) DNA. The HJ becomes 2-fold symmetrical on binding to RuvC with unstacked arms; it has a different conformation from HJ DNA in complex with RuvA. In the full resolvosome a probable DNA-RuvA(4)-RuvB(12)-RuvC(2) complex forms which resolves the HJ. Requires Mg(2+) as cofactor.

The protein resides in the cytoplasm. It carries out the reaction Endonucleolytic cleavage at a junction such as a reciprocal single-stranded crossover between two homologous DNA duplexes (Holliday junction).. In terms of biological role, the RuvA-RuvB-RuvC complex processes Holliday junction (HJ) DNA during genetic recombination and DNA repair. Endonuclease that resolves HJ intermediates. Cleaves cruciform DNA by making single-stranded nicks across the HJ at symmetrical positions within the homologous arms, yielding a 5'-phosphate and a 3'-hydroxyl group; requires a central core of homology in the junction. The consensus cleavage sequence is 5'-(A/T)TT(C/G)-3'. Cleavage occurs on the 3'-side of the TT dinucleotide at the point of strand exchange. HJ branch migration catalyzed by RuvA-RuvB allows RuvC to scan DNA until it finds its consensus sequence, where it cleaves and resolves the cruciform DNA. The polypeptide is Crossover junction endodeoxyribonuclease RuvC (Francisella philomiragia subsp. philomiragia (strain ATCC 25017 / CCUG 19701 / FSC 153 / O#319-036)).